The chain runs to 382 residues: S-adenosylmethionine synthase (382 aa).

Histidine 16 is an ATP binding site. Aspartate 18 serves as a coordination point for Mg(2+). Residue glutamate 44 participates in K(+) binding. Residues glutamate 57 and glutamine 100 each contribute to the L-methionine site. The segment at 100 to 110 is flexible loop; sequence QSPDIAQGVDN. Residues 165 to 167, 231 to 232, aspartate 240, 246 to 247, and lysine 267 contribute to the ATP site; these read DAK, RF, and RK. Aspartate 240 contacts L-methionine. An L-methionine-binding site is contributed by lysine 271.

Belongs to the AdoMet synthase family. In terms of assembly, homotetramer; dimer of dimers. Mg(2+) is required as a cofactor. Requires K(+) as cofactor.

It localises to the cytoplasm. It catalyses the reaction L-methionine + ATP + H2O = S-adenosyl-L-methionine + phosphate + diphosphate. It functions in the pathway amino-acid biosynthesis; S-adenosyl-L-methionine biosynthesis; S-adenosyl-L-methionine from L-methionine: step 1/1. Catalyzes the formation of S-adenosylmethionine (AdoMet) from methionine and ATP. The overall synthetic reaction is composed of two sequential steps, AdoMet formation and the subsequent tripolyphosphate hydrolysis which occurs prior to release of AdoMet from the enzyme. The sequence is that of S-adenosylmethionine synthase from Legionella pneumophila subsp. pneumophila (strain Philadelphia 1 / ATCC 33152 / DSM 7513).